The chain runs to 853 residues: Ion channel CASTOR (853 aa).

Over residues 1–30 (MSLDSEVSVSSSSGRDWFFPSPSFFRSSPS) the composition is skewed to low complexity. Positions 1–55 (MSLDSEVSVSSSSGRDWFFPSPSFFRSSPSQYGRRFHTNSNTHSAPSSTYPSGIR) are disordered. Polar residues predominate over residues 38-51 (TNSNTHSAPSSTYP). A helical membrane pass occupies residues 96–116 (QFGLQFALVTLTIVFLLLLLL). The stretch at 117–137 (RNTHLESQVNKLQGEILRLHA) forms a coiled coil. 3 helical membrane-spanning segments follow: residues 168-188 (NLAL…FKYI), 227-247 (LVLL…LFGV), and 279-299 (LVAV…LGLV). RCK N-terminal domains lie at 320 to 461 (QNHT…ETVV) and 580 to 752 (PERI…DYVL).

Belongs to the castor/pollux (TC 1.A.1.23) family. In terms of assembly, homooligomer. As to expression, expressed in infected and uninfected roots, leaves, seed pods, and flower buds.

Its subcellular location is the nucleus membrane. In terms of biological role, ion channel with a moderate preference for potassium over sodium and calcium. Involved in perinuclear calcium spiking but not in cytosolic calcium influx. Closed at negative voltages in presence of magnesium. Required for early signal transduction events leading to endosymbiosis. Acts early in a signal transduction chain leading from the perception of Nod factor to the activation of calcium spiking. Also involved in fungal entry into root epidermal cells during the establishment of the arbuscular mycorrhizal symbiosis. The protein is Ion channel CASTOR (CASTOR) of Lotus japonicus (Lotus corniculatus var. japonicus).